The following is a 2372-amino-acid chain: NBAS subunit of NRZ tethering complex (2372 aa).

WD repeat units follow at residues 119–158 (DPNP…LFII) and 304–343 (GEQD…LRGS). The interval 447–468 (LESSVKGEEDDGDDDSDSDEEA) is disordered. Over residues 454 to 467 (EEDDGDDDSDSDEE) the composition is skewed to acidic residues. A coiled-coil region spans residues 629–668 (YEDFLSMEEELEQRKERESKKRQELLKKVDFSKLTLEQKE).

It localises to the endoplasmic reticulum. In terms of biological role, involved in Golgi-to-endoplasmic reticulum (ER) retrograde transport; the function is proposed to depend on its association in the NRZ complex which is believed to play a role in SNARE assembly at the ER. Required for normal embryonic development. May play a role in the nonsense-mediated decay pathway of mRNAs containing premature stop codons. The polypeptide is NBAS subunit of NRZ tethering complex (Danio rerio (Zebrafish)).